The primary structure comprises 83 residues: Sec-independent protein translocase protein TatA (83 aa).

The chain crosses the membrane as a helical span at residues 1–21; the sequence is MGSLSPWHWAILAVVVIVLFG. The tract at residues 48–83 is disordered; that stretch reads NENKAEASIETPTPVQSQRVDPSAASGQDSTEARPA. A compositionally biased stretch (polar residues) spans 57 to 77; the sequence is ETPTPVQSQRVDPSAASGQDS.

Belongs to the TatA/E family. In terms of assembly, the Tat system comprises two distinct complexes: a TatABC complex, containing multiple copies of TatA, TatB and TatC subunits, and a separate TatA complex, containing only TatA subunits. Substrates initially bind to the TatABC complex, which probably triggers association of the separate TatA complex to form the active translocon.

The protein localises to the cell membrane. Part of the twin-arginine translocation (Tat) system that transports large folded proteins containing a characteristic twin-arginine motif in their signal peptide across membranes. TatA could form the protein-conducting channel of the Tat system. The polypeptide is Sec-independent protein translocase protein TatA (Mycobacterium bovis (strain BCG / Pasteur 1173P2)).